Reading from the N-terminus, the 428-residue chain is Enolase (428 aa).

Position 163 (Q163) interacts with (2R)-2-phosphoglycerate. E205 serves as the catalytic Proton donor. Mg(2+) contacts are provided by D242, E286, and D313. Residues K338, R367, S368, and K389 each coordinate (2R)-2-phosphoglycerate. Residue K338 is the Proton acceptor of the active site.

It belongs to the enolase family. Mg(2+) is required as a cofactor.

Its subcellular location is the cytoplasm. It is found in the secreted. It localises to the cell surface. The catalysed reaction is (2R)-2-phosphoglycerate = phosphoenolpyruvate + H2O. It participates in carbohydrate degradation; glycolysis; pyruvate from D-glyceraldehyde 3-phosphate: step 4/5. Catalyzes the reversible conversion of 2-phosphoglycerate (2-PG) into phosphoenolpyruvate (PEP). It is essential for the degradation of carbohydrates via glycolysis. In Syntrophus aciditrophicus (strain SB), this protein is Enolase.